A 285-amino-acid polypeptide reads, in one-letter code: MSFVAYEELIKEGDTAILSLGHGAMVAVRVQRGAQTQTRHGVLRHSVDLIGRPFGSKVTCGRGGWVYVLHPTPELWTLNLPHRTQILYSTDIALLTMMLELRPGSVVCESGTGSGSVSHAIIRTIAPTGHLHTVEFHQQRAERAREEFQEHRVGRWVTVLNQDVCRSGFGVSHVADAVFLDIPSPWEAVGHAWDALKVEGGRFCSFSPCIEQVQRTCQALAACGFSELSTLEVLPQVYNVRTVSLPVPDLGARPGPDAAPFRSGTPMKETVGHTGYLTFATKTPG.

At serine 2 the chain carries N-acetylserine. Substrate regions lie at residues 20 to 22 (LGH), 35 to 42 (QTQTRHGV), 64 to 65 (GW), 85 to 89 (QILYS), and 110 to 117 (SGTGSGSV). S-adenosyl-L-methionine-binding positions include leucine 87, 114-116 (SGS), glutamate 135, arginine 140, 163-164 (DV), and aspartate 181. 2 substrate regions span residues 180–183 (LDIP) and 205–212 (SFSPCIEQ). Threonine 274 lines the substrate pocket.

It belongs to the class I-like SAM-binding methyltransferase superfamily. TRM61 family. In terms of assembly, heterotetramer; composed of two copies of TRMT6 and two copies of TRMT61A.

Its subcellular location is the nucleus. It carries out the reaction adenosine(58) in tRNA + S-adenosyl-L-methionine = N(1)-methyladenosine(58) in tRNA + S-adenosyl-L-homocysteine + H(+). The enzyme catalyses an adenosine in mRNA + S-adenosyl-L-methionine = an N(1)-methyladenosine in mRNA + S-adenosyl-L-homocysteine + H(+). Functionally, catalytic subunit of tRNA (adenine-N(1)-)-methyltransferase, which catalyzes the formation of N(1)-methyladenine at position 58 (m1A58) in initiator methionyl-tRNA. Catalytic subunit of mRNA N(1)-methyltransferase complex, which mediates methylation of adenosine residues at the N(1) position of a small subset of mRNAs: N(1) methylation takes place in tRNA T-loop-like structures of mRNAs and is only present at low stoichiometries. The sequence is that of tRNA (adenine(58)-N(1))-methyltransferase catalytic subunit TRMT61A (TRMT61A) from Bos taurus (Bovine).